The following is a 91-amino-acid chain: YcgL domain-containing protein ETA_15380 (91 aa).

The 85-residue stretch at 1-85 (MFCVIYRSPQ…PLESLLKIHL (85 aa)) folds into the YcgL domain.

This Erwinia tasmaniensis (strain DSM 17950 / CFBP 7177 / CIP 109463 / NCPPB 4357 / Et1/99) protein is YcgL domain-containing protein ETA_15380.